The following is a 158-amino-acid chain: Small ribosomal subunit protein uS9 (158 aa).

It belongs to the universal ribosomal protein uS9 family.

This Brucella anthropi (strain ATCC 49188 / DSM 6882 / CCUG 24695 / JCM 21032 / LMG 3331 / NBRC 15819 / NCTC 12168 / Alc 37) (Ochrobactrum anthropi) protein is Small ribosomal subunit protein uS9.